The sequence spans 827 residues: DNA-binding protein RAP1 (827 aa).

Disordered stretches follow at residues 29 to 128 (SAAV…PLSN), 221 to 268 (LQEE…KVMV), and 308 to 339 (QKDTSNNNNSNVNDEDNDLLTQDNNPQTADEG). Over residues 44–57 (ANQNEENTGATAAE) the composition is skewed to polar residues. The segment covering 58-72 (TSEKVDQTEVEKKDD) has biased composition (basic and acidic residues). The segment covering 92–107 (ATANIASTSGASVTEP) has biased composition (polar residues). The region spanning 121 to 208 (VSGPPLSNMK…SLLNMENYLV (88 aa)) is the BRCT domain. A compositionally biased stretch (low complexity) spans 227–237 (SNGVDNSNSNS). Over residues 238 to 247 (DNKDSIRPKT) the composition is skewed to basic and acidic residues. The segment covering 249–260 (IISTNTNGATED) has biased composition (polar residues). Over residues 310-319 (DTSNNNNSNV) the composition is skewed to low complexity. Polar residues predominate over residues 326–339 (LLTQDNNPQTADEG). The HTH myb-type domain occupies 355-415 (LPSHNKASFT…RFRVYLSKRL (61 aa)). A DNA-binding region (H-T-H motif) is located at residues 388-411 (YDEISHYVPNHTGNSIRHRFRVYL). Position 486 is a phosphothreonine (T486). Residues 567–613 (QNREPEPMKNLTNRPKRPGVPTPGNYNSAAKRARNYSSQRNVQPTAN) form a disordered region. Residues 601 to 611 (NYSSQRNVQPT) show a composition bias toward polar residues. Residues 630-695 (SYAIPENELL…IDPDTISFPP (66 aa)) are activation domain. Phosphoserine is present on S731.

Belongs to the RAP1 family. Interacts (via C-terminus) with RIF1. Interacts (via C-terminus) with SIR3. Interacts (via C-terminus) with SIR4. Interacts with a GCR1 homodimer.

The protein resides in the nucleus. It is found in the chromosome. Its subcellular location is the telomere. Functionally, essential regulatory protein in yeast whose DNA-binding sites are found at three types of chromosomal elements: promoters, silencers, and telomeres. RAP1 is also involved in the regulation of telomere structure, where its binding sites are found within the terminal poly[C(1-3)A] sequences. The opposite regulatory functions of RAP1 are not intrinsic to its binding sites but, instead, result from interactions with different factors at promoters and silencers. RAP1 mediates repression of the HM loci and telomeres by recruiting the SIR complex. May also target the binding of RIF1 and RIF2 to silencers and telomeres. Forms with GCR1 a transcriptional activation complex that is required for expression of glycolytic and ribosomal gene. This is DNA-binding protein RAP1 (RAP1) from Saccharomyces cerevisiae (strain ATCC 204508 / S288c) (Baker's yeast).